The primary structure comprises 498 residues: Probable malate:quinone oxidoreductase 2 (498 aa).

Belongs to the MQO family. Requires FAD as cofactor.

It catalyses the reaction (S)-malate + a quinone = a quinol + oxaloacetate. It participates in carbohydrate metabolism; tricarboxylic acid cycle; oxaloacetate from (S)-malate (quinone route): step 1/1. This is Probable malate:quinone oxidoreductase 2 from Staphylococcus aureus (strain MW2).